The following is a 95-amino-acid chain: Pyrimidine/purine nucleoside phosphorylase (95 aa).

Belongs to the nucleoside phosphorylase PpnP family.

The enzyme catalyses a purine D-ribonucleoside + phosphate = a purine nucleobase + alpha-D-ribose 1-phosphate. It carries out the reaction adenosine + phosphate = alpha-D-ribose 1-phosphate + adenine. The catalysed reaction is cytidine + phosphate = cytosine + alpha-D-ribose 1-phosphate. It catalyses the reaction guanosine + phosphate = alpha-D-ribose 1-phosphate + guanine. The enzyme catalyses inosine + phosphate = alpha-D-ribose 1-phosphate + hypoxanthine. It carries out the reaction thymidine + phosphate = 2-deoxy-alpha-D-ribose 1-phosphate + thymine. The catalysed reaction is uridine + phosphate = alpha-D-ribose 1-phosphate + uracil. It catalyses the reaction xanthosine + phosphate = alpha-D-ribose 1-phosphate + xanthine. In terms of biological role, catalyzes the phosphorolysis of diverse nucleosides, yielding D-ribose 1-phosphate and the respective free bases. Can use uridine, adenosine, guanosine, cytidine, thymidine, inosine and xanthosine as substrates. Also catalyzes the reverse reactions. The chain is Pyrimidine/purine nucleoside phosphorylase from Yersinia pestis bv. Antiqua (strain Antiqua).